A 1179-amino-acid polypeptide reads, in one-letter code: MIWCLRLTVLSLIISQGADGRRKPEVVSVVGRAGESAVLGCDLLPPAGHPPLHVIEWLRFGFLLPIFIQFGLYSPRIDPDYVGRVRLQTGASLQIEGLRVEDQGWYECRVLFLDQHSPEQDFANGSWVHLTVNSPPQFQETPPLVLEVKELEAVTLRCVARGSPQPYVTWKFRGQDLGKGQGQVQVQNGTLWIRRVERGSAGDYTCQASSSEGSITHATQLLVLGPPVIVVPPSNSTVNSSQDVSLACRAEAYPANLTYSWFQDGVNVFHISRLQSRVRILVDGSLWLQATQPDDAGHYTCVPSNGFLHPPSASAYLTVLYPAQVTVMPPETPLPTGMRGVIRCPVRANPPLLFVTWTKDGQALQLDKFPGWSLGPEGSLIIALGNENALGEYSCTPYNSLGTAGPSPVTQVLLKAPPAFIDQPKEEYFQEVGRELLIPCSARGDPPPIVSWAKVGRGLQGQAQVDSNNSLVLRPLTKEAQGRWECSASNAVARVTTSTNVYVLGTSPHVVTNVSVVPLPKGANVSWEPGFDGGYLQRFSVWYTPLAKRPDRAHHDWVSLAVPIGATHLLVPGLQAHAQYQFSVLAQNKLGSGPFSEIVLSIPEGLPTTPAAPGLPPTEIPPPLSPPRGLVAVRTPRGVLLHWDPPELIPGRLDGYILEGRQGSQGWEILDQGVAGTEIQLLVPGLIKDVLYEFRLVAFADSYVSDPSNVANISTSGLEVYPSRTQLPGLLPQPVLAGVVGGVCFLGVAVLVSILAACLMNRRRAARRHRKRLRQDPPLIFSPRGKSGSHSAPGSGSPDSVTKFKLQGSPVPSLRQSLLWGEPARPPSPHPDSPLGRGPLPLEPICRGPDGRFVMGPTVAPSQEKLCLERSEPRTSAKRLAQSFDCSSSSPSGVPQPLCITDISPVGQPLAAVPSPLPGPGPLLQYLSLPFFREMNVDGDWPPLEEPTPAPPPDFMDSQPCPTSSFLPPPDSPPANLRAVLPGTLMGVGVSSEPPYTALADWTLRERVLPGLLSAAPRGSLTSQSSGRGSASFLRPPSTAPSAGGSYLSPAPGDTSSWASGPERWPRREHVVTVSKRRNTSVDENYEWDSEFPGDMELLETWHPGLASSRTHPELEPELGVKTPEESCLLNPTHAAGPEARCAALREEFLAFRRRRDATRARLPAYQQSISYPEQATLL.

The signal sequence occupies residues 1 to 20 (MIWCLRLTVLSLIISQGADG). At 21–734 (RRKPEVVSVV…TQLPGLLPQP (714 aa)) the chain is on the extracellular side. Ig-like domains are found at residues 24–124 (PEVV…DFAN), 136–216 (PQFQ…GSIT), 226–318 (PPVI…AYLT), 322–410 (PAQV…SPVT), and 418–502 (PAFI…TNVY). 2 cysteine pairs are disulfide-bonded: Cys-41–Cys-108 and Cys-158–Cys-206. N-linked (GlcNAc...) asparagine glycans are attached at residues Asn-188, Asn-239, and Asn-256. 3 disulfides stabilise this stretch: Cys-248–Cys-301, Cys-344–Cys-395, and Cys-440–Cys-486. Fibronectin type-III domains are found at residues 507 to 611 (SPHV…TTPA) and 623 to 718 (PLSP…TSGL). N-linked (GlcNAc...) asparagine glycans are attached at residues Asn-513 and Asn-524. The chain crosses the membrane as a helical span at residues 735–755 (VLAGVVGGVCFLGVAVLVSIL). Residues 756-1179 (AACLMNRRRA…ISYPEQATLL (424 aa)) lie on the Cytoplasmic side of the membrane. The disordered stretch occupies residues 767–807 (RRHRKRLRQDPPLIFSPRGKSGSHSAPGSGSPDSVTKFKLQ). Residues 785 to 800 (GKSGSHSAPGSGSPDS) are compositionally biased toward low complexity. At Ser-809 the chain carries Phosphoserine. 3 disordered regions span residues 819–842 (LWGE…PLPL), 942–974 (PPLE…DSPP), and 1016–1079 (APRG…KRRN). The span at 944 to 954 (LEEPTPAPPPD) shows a compositional bias: pro residues. Over residues 1020–1029 (SLTSQSSGRG) the composition is skewed to polar residues. Positions 1177–1179 (TLL) match the PDZ-binding motif.

The protein belongs to the immunoglobulin superfamily. Turtle family. As to quaternary structure, interacts with MAGI2 and SHANK1. As to expression, expressed in both cell bodies and dendrites of cortical and hippocampal neurons and also cerebellar Purkinje cells (at protein level).

The protein localises to the cell membrane. Its subcellular location is the synapse. In terms of biological role, functions in dendrite outgrowth and synapse maturation. In Mus musculus (Mouse), this protein is Protein turtle homolog A (Igsf9).